Here is a 391-residue protein sequence, read N- to C-terminus: ATP phosphoribosyltransferase regulatory subunit (391 aa).

This sequence belongs to the class-II aminoacyl-tRNA synthetase family. HisZ subfamily. As to quaternary structure, heteromultimer composed of HisG and HisZ subunits.

It is found in the cytoplasm. The protein operates within amino-acid biosynthesis; L-histidine biosynthesis; L-histidine from 5-phospho-alpha-D-ribose 1-diphosphate: step 1/9. Its function is as follows. Required for the first step of histidine biosynthesis. May allow the feedback regulation of ATP phosphoribosyltransferase activity by histidine. This Clostridium kluyveri (strain ATCC 8527 / DSM 555 / NBRC 12016 / NCIMB 10680 / K1) protein is ATP phosphoribosyltransferase regulatory subunit.